Here is a 689-residue protein sequence, read N- to C-terminus: tRNA 5-methylaminomethyl-2-thiouridine biosynthesis bifunctional protein MnmC (689 aa).

A tRNA (mnm(5)s(2)U34)-methyltransferase region spans residues 1 to 245 (MNQRPIQTAT…KREMLTGTLP (245 aa)). The FAD-dependent cmnm(5)s(2)U34 oxidoreductase stretch occupies residues 270–689 (IGGGIVSALT…RSPATQESSR (420 aa)).

It in the N-terminal section; belongs to the methyltransferase superfamily. tRNA (mnm(5)s(2)U34)-methyltransferase family. In the C-terminal section; belongs to the DAO family. FAD is required as a cofactor.

The protein resides in the cytoplasm. The catalysed reaction is 5-aminomethyl-2-thiouridine(34) in tRNA + S-adenosyl-L-methionine = 5-methylaminomethyl-2-thiouridine(34) in tRNA + S-adenosyl-L-homocysteine + H(+). Its function is as follows. Catalyzes the last two steps in the biosynthesis of 5-methylaminomethyl-2-thiouridine (mnm(5)s(2)U) at the wobble position (U34) in tRNA. Catalyzes the FAD-dependent demodification of cmnm(5)s(2)U34 to nm(5)s(2)U34, followed by the transfer of a methyl group from S-adenosyl-L-methionine to nm(5)s(2)U34, to form mnm(5)s(2)U34. This chain is tRNA 5-methylaminomethyl-2-thiouridine biosynthesis bifunctional protein MnmC, found in Yersinia pseudotuberculosis serotype I (strain IP32953).